We begin with the raw amino-acid sequence, 259 residues long: Phosphate import ATP-binding protein PstB 1 (259 aa).

The ABC transporter domain occupies 13–254 (IETKDVDLFY…PAEKETEDYI (242 aa)). 45–52 (GPSGCGKS) is an ATP binding site.

This sequence belongs to the ABC transporter superfamily. Phosphate importer (TC 3.A.1.7) family. In terms of assembly, the complex is composed of two ATP-binding proteins (PstB), two transmembrane proteins (PstC and PstA) and a solute-binding protein (PstS).

The protein resides in the cell membrane. The catalysed reaction is phosphate(out) + ATP + H2O = ADP + 2 phosphate(in) + H(+). Functionally, part of the ABC transporter complex PstSACB involved in phosphate import. Responsible for energy coupling to the transport system. The polypeptide is Phosphate import ATP-binding protein PstB 1 (Listeria innocua serovar 6a (strain ATCC BAA-680 / CLIP 11262)).